A 626-amino-acid chain; its full sequence is Chaperone protein HtpG (626 aa).

The a; substrate-binding stretch occupies residues 1–341 (METKQFKAES…SEDLSLNISR (341 aa)). The segment at 342–552 (EMLQHDRQLK…EGEISIEMEK (211 aa)) is b. Positions 553–626 (ILSAMPNNEN…FSNSICKLMI (74 aa)) are c.

The protein belongs to the heat shock protein 90 family. As to quaternary structure, homodimer.

The protein resides in the cytoplasm. Functionally, molecular chaperone. Has ATPase activity. The protein is Chaperone protein HtpG of Alkaliphilus oremlandii (strain OhILAs) (Clostridium oremlandii (strain OhILAs)).